Reading from the N-terminus, the 414-residue chain is Transcription factor FAMA (414 aa).

Disordered regions lie at residues 1 to 61 and 142 to 197; these read MDKD…TPFD and KEDQ…SQRM. Low complexity-rich tracts occupy residues 12 to 24 and 35 to 49; these read GESS…NSSG and QQQQ…QQHQ. The segment covering 166–175 has biased composition (basic and acidic residues); it reads RENKNVTKKE. A compositionally biased stretch (basic residues) spans 176–185; the sequence is VKSKRKRART. The span at 187 to 197 shows a compositional bias: basic and acidic residues; that stretch reads KTSEEVESQRM. Residues 194-245 form the bHLH domain; it reads SQRMTHIAVERNRRKQMNEHLRVLRSLMPGSYVQRGDQASIIGGAIEFVREL. Residues 249-253 carry the LxCxE motif motif; the sequence is LQCLE.

Interacts with FAMA through its LxCxE motif. Self-interacts. Also interacts with bHLH071 and bHLH093. Interacts with RBR1. In terms of tissue distribution, resctricted to stomatal cell lineages (at protein level). Expressed in roots, leaves, stems, and flowers.

It localises to the nucleus. Functionally, transcription activator. Together with MYB88 and MYB124, ensures that stomata contain just two guard cells (GCs) by enforcing a single symmetric precursor cell division before stomatal maturity. Together with SPCH and MUTE, regulates the stomata formation. Required to promote differentiation and morphogenesis of stomatal guard cells and to halt proliferative divisions in their immediate precursors. Mediates the formation of stomata. Prevents histone H3K27me3 marks and derepresses stem cell gene expression. This is Transcription factor FAMA (FAMA) from Arabidopsis thaliana (Mouse-ear cress).